The following is an 892-amino-acid chain: Alanine--tRNA ligase (892 aa).

Zn(2+) is bound by residues His596, His600, Cys700, and His704.

It belongs to the class-II aminoacyl-tRNA synthetase family. The cofactor is Zn(2+).

It is found in the cytoplasm. The catalysed reaction is tRNA(Ala) + L-alanine + ATP = L-alanyl-tRNA(Ala) + AMP + diphosphate. Functionally, catalyzes the attachment of alanine to tRNA(Ala) in a two-step reaction: alanine is first activated by ATP to form Ala-AMP and then transferred to the acceptor end of tRNA(Ala). Also edits incorrectly charged Ser-tRNA(Ala) and Gly-tRNA(Ala) via its editing domain. This Methanococcus maripaludis (strain C5 / ATCC BAA-1333) protein is Alanine--tRNA ligase.